We begin with the raw amino-acid sequence, 216 residues long: Ribosomal RNA small subunit methyltransferase G (216 aa).

S-adenosyl-L-methionine contacts are provided by residues Gly-82, Leu-87, 135-136 (AE), and Arg-148.

Belongs to the methyltransferase superfamily. RNA methyltransferase RsmG family.

The protein localises to the cytoplasm. The enzyme catalyses guanosine(527) in 16S rRNA + S-adenosyl-L-methionine = N(7)-methylguanosine(527) in 16S rRNA + S-adenosyl-L-homocysteine. Its function is as follows. Specifically methylates the N7 position of guanine in position 527 of 16S rRNA. The protein is Ribosomal RNA small subunit methyltransferase G of Caulobacter vibrioides (strain ATCC 19089 / CIP 103742 / CB 15) (Caulobacter crescentus).